We begin with the raw amino-acid sequence, 534 residues long: Potential RNA-dependent RNA polymerase (534 aa).

The RdRp catalytic domain occupies 255-373 (DVVVCTDFSK…TYPGISAEDV (119 aa)).

The protein localises to the virion. The catalysed reaction is RNA(n) + a ribonucleoside 5'-triphosphate = RNA(n+1) + diphosphate. Functionally, RNA-directed RNA polymerase that is involved in both transcription and genome replication. The sequence is that of Potential RNA-dependent RNA polymerase (Segment-2) from Human picobirnavirus (strain Human/Thailand/Hy005102/-) (PBV).